A 190-amino-acid polypeptide reads, in one-letter code: RING finger protein 227 (190 aa).

An RING-type zinc finger spans residues 18–81 (CNICFRPYNL…RRAVTCPFCR (64 aa)). Positions 108 to 147 (ARAEREGDPMGSPAKDSGEDGEDDDGEAESEKGAGPPSAG) are disordered. Acidic residues predominate over residues 126–135 (EDGEDDDGEA).

This chain is RING finger protein 227, found in Mus musculus (Mouse).